The chain runs to 261 residues: Cytochrome c oxidase subunit 3 (261 aa).

The Mitochondrial matrix portion of the chain corresponds to 1-15; it reads MTHQTHAYHMVNPSP. The chain crosses the membrane as a helical span at residues 16–34; the sequence is WPLTGALSALLMSSGLTMW. Topologically, residues 35-40 are mitochondrial intermembrane; it reads FHFNSL. Residues 41 to 66 form a helical membrane-spanning segment; it reads ILLTTGLVTNILTMYQWWRDVIREST. Residues 67-72 lie on the Mitochondrial matrix side of the membrane; it reads FQGHHT. A helical membrane pass occupies residues 73 to 105; the sequence is PVVQKGLRYGMVLFIISEVLFFTGFFWAFYHSS. Residues 106–128 are Mitochondrial intermembrane-facing; it reads LAPTPELGGCWPPTGINPLNPLE. A helical membrane pass occupies residues 129–152; that stretch reads VPLLNTSVLLASGVSITWAHHSLM. The Mitochondrial matrix segment spans residues 153 to 155; sequence EGN. A helical membrane pass occupies residues 156–183; sequence RKQMLQALFITIALGVYFTLLQASEYHE. At 184 to 190 the chain is on the mitochondrial intermembrane side; sequence ASFTISD. A helical membrane pass occupies residues 191-223; the sequence is GVYGSTFFVATGFHGLHVIIGSTFLIVCFLRQL. The Mitochondrial matrix portion of the chain corresponds to 224–232; the sequence is KFHFTSDHH. Residues 233 to 256 traverse the membrane as a helical segment; sequence FGFEAAAWYWHFVDVVWLFLYVSI. Residues 257–261 are Mitochondrial intermembrane-facing; it reads YWWGS.

This sequence belongs to the cytochrome c oxidase subunit 3 family. In terms of assembly, component of the cytochrome c oxidase (complex IV, CIV), a multisubunit enzyme composed of 14 subunits. The complex is composed of a catalytic core of 3 subunits MT-CO1, MT-CO2 and MT-CO3, encoded in the mitochondrial DNA, and 11 supernumerary subunits COX4I, COX5A, COX5B, COX6A, COX6B, COX6C, COX7A, COX7B, COX7C, COX8 and NDUFA4, which are encoded in the nuclear genome. The complex exists as a monomer or a dimer and forms supercomplexes (SCs) in the inner mitochondrial membrane with NADH-ubiquinone oxidoreductase (complex I, CI) and ubiquinol-cytochrome c oxidoreductase (cytochrome b-c1 complex, complex III, CIII), resulting in different assemblies (supercomplex SCI(1)III(2)IV(1) and megacomplex MCI(2)III(2)IV(2)).

It localises to the mitochondrion inner membrane. It catalyses the reaction 4 Fe(II)-[cytochrome c] + O2 + 8 H(+)(in) = 4 Fe(III)-[cytochrome c] + 2 H2O + 4 H(+)(out). Its function is as follows. Component of the cytochrome c oxidase, the last enzyme in the mitochondrial electron transport chain which drives oxidative phosphorylation. The respiratory chain contains 3 multisubunit complexes succinate dehydrogenase (complex II, CII), ubiquinol-cytochrome c oxidoreductase (cytochrome b-c1 complex, complex III, CIII) and cytochrome c oxidase (complex IV, CIV), that cooperate to transfer electrons derived from NADH and succinate to molecular oxygen, creating an electrochemical gradient over the inner membrane that drives transmembrane transport and the ATP synthase. Cytochrome c oxidase is the component of the respiratory chain that catalyzes the reduction of oxygen to water. Electrons originating from reduced cytochrome c in the intermembrane space (IMS) are transferred via the dinuclear copper A center (CU(A)) of subunit 2 and heme A of subunit 1 to the active site in subunit 1, a binuclear center (BNC) formed by heme A3 and copper B (CU(B)). The BNC reduces molecular oxygen to 2 water molecules using 4 electrons from cytochrome c in the IMS and 4 protons from the mitochondrial matrix. The chain is Cytochrome c oxidase subunit 3 (MT-CO3) from Hippopotamus amphibius (Hippopotamus).